The primary structure comprises 147 residues: Hemoglobin subunit beta (147 aa).

The 145-residue stretch at 3-147 (HWSCEEKQFI…VAHALALGYH (145 aa)) folds into the Globin domain. Heme b contacts are provided by His-64 and His-93.

The protein belongs to the globin family. In terms of assembly, heterotetramer of two alpha-D chains and two beta chains. In terms of tissue distribution, red blood cells.

Involved in oxygen transport from the lung to the various peripheral tissues. This is Hemoglobin subunit beta (HBB) from Chelonoidis carbonarius (Red-footed tortoise).